The primary structure comprises 235 residues: Large ribosomal subunit protein uL4 (235 aa).

The disordered stretch occupies residues 45–75 (RAGTASTKTRGEVSGGGRKPWPQKHTGRARH). Residues 65-75 (WPQKHTGRARH) are compositionally biased toward basic residues.

The protein belongs to the universal ribosomal protein uL4 family. As to quaternary structure, part of the 50S ribosomal subunit.

One of the primary rRNA binding proteins, this protein initially binds near the 5'-end of the 23S rRNA. It is important during the early stages of 50S assembly. It makes multiple contacts with different domains of the 23S rRNA in the assembled 50S subunit and ribosome. Its function is as follows. This protein only weakly controls expression of the E.coli S10 operon. It is incorporated into E.coli ribosomes, however it is not as firmly associated as the endogenous protein. In terms of biological role, forms part of the polypeptide exit tunnel. The sequence is that of Large ribosomal subunit protein uL4 (rplD) from Thermotoga maritima (strain ATCC 43589 / DSM 3109 / JCM 10099 / NBRC 100826 / MSB8).